The primary structure comprises 1308 residues: Transposon TX1 uncharacterized 149 kDa protein (1308 aa).

The 272-residue stretch at 494–765 folds into the Reverse transcriptase domain; it reads EAFKKGELPL…KIIKYLGVYL (272 aa).

In Xenopus laevis (African clawed frog), this protein is Transposon TX1 uncharacterized 149 kDa protein.